The primary structure comprises 147 residues: Neocarzinostatin (147 aa).

The N-terminal stretch at 1–34 is a signal peptide; that stretch reads MVPISIIRNRVAKVAVGSAAVLGLAVGFQTPAVA. Disulfide bonds link Cys71–Cys81 and Cys122–Cys127.

The protein belongs to the neocarzinostatin family.

Functionally, NCS has antibiotic activity (for Gram-positive bacteria) and antitumor activity (for certain mouse tumors). NCS binds non-covalently to a chromophore which is the cytotoxic and mutagenic component of the antibiotic. The chromophore binds to DNA as a weak intercalator and causes single- and double-strand breaks. The chain is Neocarzinostatin (ncsA) from Streptomyces carzinostaticus.